The chain runs to 275 residues: Translation initiation factor 2 subunit alpha (275 aa).

The 72-residue stretch at 12-83 (GEFVVATVKR…RKGHIDLSLR (72 aa)) folds into the S1 motif domain.

Belongs to the eIF-2-alpha family. Heterotrimer composed of an alpha, a beta and a gamma chain.

Functionally, eIF-2 functions in the early steps of protein synthesis by forming a ternary complex with GTP and initiator tRNA. The sequence is that of Translation initiation factor 2 subunit alpha (eif2a) from Pyrococcus horikoshii (strain ATCC 700860 / DSM 12428 / JCM 9974 / NBRC 100139 / OT-3).